A 104-amino-acid polypeptide reads, in one-letter code: Transcription elongation factor A protein-like 9 (104 aa).

The tract at residues Met1–Arg48 is disordered. Residues Gly9–Glu31 are compositionally biased toward basic and acidic residues. Positions Gly32 to Ser41 are enriched in acidic residues.

The protein belongs to the TFS-II family. TFA subfamily.

The protein localises to the nucleus. May be involved in transcriptional regulation. The protein is Transcription elongation factor A protein-like 9 (Tceal9) of Mus musculus (Mouse).